Consider the following 105-residue polypeptide: Antimicrobial peptide 1 (105 aa).

The first 26 residues, 1–26 (METKRLAYVMFVLVCLFLAMAQPSQA), serve as a signal peptide directing secretion. Disulfide bonds link cysteine 37–cysteine 93, cysteine 47–cysteine 105, and cysteine 49–cysteine 77.

As to expression, detected at higher levels in needles and twigs from canker-resistant seedlings than in needles from canker-susceptible plants. During summer, detected on cankered, healthy and marginal bark. During winter, detected at lower levels in cankered bark and bark from the canker margin than in healthy bark (at protein level).

It is found in the secreted. Its subcellular location is the cell wall. Antimicrobial peptide. In Pinus monticola (Western white pine), this protein is Antimicrobial peptide 1.